Consider the following 353-residue polypeptide: Photosystem II protein D1 (353 aa).

The residue at position 2 (threonine 2) is an N-acetylthreonine. Position 2 is a phosphothreonine (threonine 2). A run of 3 helical transmembrane segments spans residues tyrosine 29–serine 46, histidine 118–leucine 133, and tryptophan 142–alanine 156. A chlorophyll a-binding site is contributed by histidine 118. Pheophytin a is bound at residue tyrosine 126. The [CaMn4O5] cluster site is built by aspartate 170 and glutamate 189. Residues phenylalanine 197–leucine 218 traverse the membrane as a helical segment. A chlorophyll a-binding site is contributed by histidine 198. Residues histidine 215 and serine 264–phenylalanine 265 each bind a quinone. Residue histidine 215 participates in Fe cation binding. Histidine 272 contributes to the Fe cation binding site. Residues phenylalanine 274 to leucine 288 form a helical membrane-spanning segment. Residues histidine 332, glutamate 333, aspartate 342, and alanine 344 each contribute to the [CaMn4O5] cluster site. Residues valine 345–glycine 353 constitute a propeptide that is removed on maturation.

This sequence belongs to the reaction center PufL/M/PsbA/D family. PSII is composed of 1 copy each of membrane proteins PsbA, PsbB, PsbC, PsbD, PsbE, PsbF, PsbH, PsbI, PsbJ, PsbK, PsbL, PsbM, PsbT, PsbX, PsbY, PsbZ, Psb30/Ycf12, at least 3 peripheral proteins of the oxygen-evolving complex and a large number of cofactors. It forms dimeric complexes. The cofactor is The D1/D2 heterodimer binds P680, chlorophylls that are the primary electron donor of PSII, and subsequent electron acceptors. It shares a non-heme iron and each subunit binds pheophytin, quinone, additional chlorophylls, carotenoids and lipids. D1 provides most of the ligands for the Mn4-Ca-O5 cluster of the oxygen-evolving complex (OEC). There is also a Cl(-1) ion associated with D1 and D2, which is required for oxygen evolution. The PSII complex binds additional chlorophylls, carotenoids and specific lipids.. In terms of processing, tyr-161 forms a radical intermediate that is referred to as redox-active TyrZ, YZ or Y-Z. C-terminally processed by CTPA; processing is essential to allow assembly of the oxygen-evolving complex and thus photosynthetic growth.

It localises to the plastid. The protein resides in the chloroplast thylakoid membrane. It catalyses the reaction 2 a plastoquinone + 4 hnu + 2 H2O = 2 a plastoquinol + O2. In terms of biological role, photosystem II (PSII) is a light-driven water:plastoquinone oxidoreductase that uses light energy to abstract electrons from H(2)O, generating O(2) and a proton gradient subsequently used for ATP formation. It consists of a core antenna complex that captures photons, and an electron transfer chain that converts photonic excitation into a charge separation. The D1/D2 (PsbA/PsbD) reaction center heterodimer binds P680, the primary electron donor of PSII as well as several subsequent electron acceptors. The protein is Photosystem II protein D1 of Aethionema cordifolium (Lebanon stonecress).